The primary structure comprises 692 residues: Putative ESX-1 scaffolding and assembly protein SaeA (692 aa).

The segment covering 1 to 21 has biased composition (basic and acidic residues); that stretch reads MGERGELVSDLHPSDDHDADP. 2 disordered regions span residues 1–23 and 87–134; these read MGERGELVSDLHPSDDHDADPRL and PAAP…TTGF. Over residues 89 to 107 the composition is skewed to pro residues; it reads APEPDPPPVPEPQPEPEPG.

Functionally, may be involved in assembly of the ESX-1 / type VII specialized secretion system (T7SS), which exports several proteins including EsxA and EsxB. Involved in DNA conjugation in recipient (MKD8) but not donor (mc(2)155) strain. The chain is Putative ESX-1 scaffolding and assembly protein SaeA (saeA) from Mycolicibacterium smegmatis (strain MKD8) (Mycobacterium smegmatis).